The chain runs to 313 residues: Fructose-1,6-bisphosphatase class 1 (313 aa).

The Mg(2+) site is built by glutamate 91, aspartate 112, leucine 114, and aspartate 115. Substrate-binding positions include aspartate 115–serine 118, tyrosine 223, and lysine 254. Glutamate 260 is a binding site for Mg(2+).

This sequence belongs to the FBPase class 1 family. In terms of assembly, homotetramer. Mg(2+) is required as a cofactor.

The protein localises to the cytoplasm. The enzyme catalyses beta-D-fructose 1,6-bisphosphate + H2O = beta-D-fructose 6-phosphate + phosphate. Its pathway is carbohydrate biosynthesis; gluconeogenesis. This is Fructose-1,6-bisphosphatase class 1 from Geobacter sulfurreducens (strain ATCC 51573 / DSM 12127 / PCA).